A 688-amino-acid chain; its full sequence is PTS system glucoside-specific EIICBA component (688 aa).

The 425-residue stretch at lysine 3 to aspartate 427 folds into the PTS EIIC type-1 domain. The next 10 membrane-spanning stretches (helical) occupy residues isoleucine 12 to phenylalanine 32, leucine 81 to methionine 101, leucine 137 to leucine 157, phenylalanine 182 to tryptophan 202, leucine 223 to isoleucine 243, alanine 284 to isoleucine 304, valine 315 to proline 335, phenylalanine 340 to leucine 360, leucine 364 to glycine 384, and leucine 395 to isoleucine 415. The 82-residue stretch at alanine 438–lysine 519 folds into the PTS EIIB type-1 domain. Cysteine 460 (phosphocysteine intermediate; for EIIB activity) is an active-site residue. In terms of domain architecture, PTS EIIA type-1 spans aspartate 560–asparagine 664. Catalysis depends on histidine 612, which acts as the Tele-phosphohistidine intermediate; for EIIA activity.

It is found in the cell membrane. Functionally, the phosphoenolpyruvate-dependent sugar phosphotransferase system (sugar PTS), a major carbohydrate active -transport system, catalyzes the phosphorylation of incoming sugar substrates concomitantly with their translocation across the cell membrane. This system is involved in alpha- and beta-glucoside transport. This is PTS system glucoside-specific EIICBA component (glcB) from Staphylococcus aureus (strain USA300).